The chain runs to 242 residues: Terpene cyclase dpchB (242 aa).

7 helical membrane passes run V16 to V36, A51 to F71, Y78 to V95, L114 to V134, A141 to C161, S169 to I189, and I207 to V227.

This sequence belongs to the paxB family.

The protein resides in the membrane. The protein operates within secondary metabolite biosynthesis; terpenoid biosynthesis. Terpene cyclase; part of the gene cluster that mediates the biosynthesis of the diterpenoid pyrones higginsianins A and B. The first step of the pathway is the synthesis of the alpha-pyrone moiety by the polyketide synthase dpchA via condensation of one acetyl-CoA starter unit with 3 malonyl-CoA units and 2 methylations. The alpha-pyrone is then combined with geranylgeranyl pyrophosphate (GGPP) formed by the GGPP synthase dpchD through the action of the prenyltransferase dpchC to yield a linear alpha-pyrone diterpenoid. Subsequent steps in the diterpenoid pyrone biosynthetic pathway involve the decalin core formation, which is initiated by the epoxidation of the C10-C11 olefin by the FAD-dependent oxidoreductase dpchE, and is followed by a cyclization cascade catalyzed by the terpene cyclase dpchB. The short chain dehydrogenase/reductase dpchG then oxidizes the 8S hydroxy group to a ketone and the short chain dehydrogenase/reductase dpchH reduces the ketone to the 8R hydroxy group to yield higginsianin B. Finally, the FAD-dependent oxidoreductase dpchF converts higginsianin B into higginsianin A. The sequence is that of Terpene cyclase dpchB from Colletotrichum higginsianum (strain IMI 349063) (Crucifer anthracnose fungus).